Consider the following 122-residue polypeptide: uncharacterized protein (122 aa).

A helical transmembrane segment spans residues 9 to 25; the sequence is AFPSPVFLGGVFFVFFF.

The protein localises to the cytoplasm. It localises to the nucleus. It is found in the membrane. This is an uncharacterized protein from Saccharomyces cerevisiae (strain ATCC 204508 / S288c) (Baker's yeast).